A 243-amino-acid polypeptide reads, in one-letter code: DNA repair protein RecO (243 aa).

The protein belongs to the RecO family.

In terms of biological role, involved in DNA repair and RecF pathway recombination. The chain is DNA repair protein RecO from Caulobacter vibrioides (strain NA1000 / CB15N) (Caulobacter crescentus).